Reading from the N-terminus, the 770-residue chain is NAD-dependent malic enzyme (770 aa).

A malic enzyme region spans residues methionine 1–glycine 440. Residue lysine 107 is the Proton acceptor of the active site. A divalent metal cation-binding residues include glutamate 149 and aspartate 150. Aspartate 175 and asparagine 300 together coordinate NAD(+). The tract at residues phenylalanine 441–valine 770 is phosphate acetyltransferase.

The protein in the N-terminal section; belongs to the malic enzymes family. This sequence in the C-terminal section; belongs to the phosphate acetyltransferase and butyryltransferase family. As to quaternary structure, homooctamer. It depends on Mg(2+) as a cofactor. Mn(2+) serves as cofactor.

It catalyses the reaction (S)-malate + NAD(+) = pyruvate + CO2 + NADH. Its activity is regulated as follows. Subject to substrate inhibition and shows allosteric regulation by acetyl-CoA. Its function is as follows. Required for symbiotic nitrogen fixation. Plays a key role in the conversion of malate to acetyl-CoA for efficient tricarboxylic acid cycle function in nitrogen-fixating bacteria. The protein is NAD-dependent malic enzyme (dme) of Rhizobium meliloti (strain 1021) (Ensifer meliloti).